The chain runs to 461 residues: MSKKPWAGRFTQPTDAFVEAFTASIDFDQRLYRYDIQGSMAHARMLSRQGIITGAEAQTIISGLESILADIEKGDFEFSVALEDIHMNIEARLIERIGSVGGKLHTARSRNDQVALDIRLYLRDEVKEVRSFLEKVQESLLEQAERNLGVIMPGYTHLQTAQPILFSHHMMAYYEMFRRDSWRMADIYKRINLLPLGAGALAGTTFPIDREYVAEQLGFDGVTRNSLDSVSDRDFALEFCSAASVVMMHLSRLSEELILWSSADFHFIDLSDAFCTGSSIMPQKKNPDVPELVRGKTGRVYGNLMSLLTVMKALPLAYNKDMQEDKEPLFDTIDTVKGSLKIFADMIAQMSIRADNMREAAARGFSTATDVADYVVRKGIPFRDAHEIVGKTVRYCIEHDKQIEELTLEEFKAFSEHIDSDIYDFITLEASVDSRRATGGTAREAVAREIGRARQERLQRM.

Belongs to the lyase 1 family. Argininosuccinate lyase subfamily.

Its subcellular location is the cytoplasm. It carries out the reaction 2-(N(omega)-L-arginino)succinate = fumarate + L-arginine. It functions in the pathway amino-acid biosynthesis; L-arginine biosynthesis; L-arginine from L-ornithine and carbamoyl phosphate: step 3/3. The sequence is that of Argininosuccinate lyase from Syntrophotalea carbinolica (strain DSM 2380 / NBRC 103641 / GraBd1) (Pelobacter carbinolicus).